The following is a 579-amino-acid chain: Mitochondrial distribution and morphology protein 36 (579 aa).

Residues 1-27 form a disordered region; sequence MDENGTVKPGYELKGLNSGNSRSNMDK. Ser-42 carries the post-translational modification Phosphoserine. 2 disordered regions span residues 378-401 and 446-518; these read TPINSSDSDNLSNGEIDRLDGRRL and DNKH…ESQS. A compositionally biased stretch (polar residues) spans 379 to 390; it reads PINSSDSDNLSN. A compositionally biased stretch (basic and acidic residues) spans 446 to 463; that stretch reads DNKHSTKDTDSNIRRNEH. The span at 495–518 shows a compositional bias: low complexity; that stretch reads PSQSSSRMSTLPLSPSSSLLESQS.

Its function is as follows. Involved in mitochondrial distribution and morphology. The chain is Mitochondrial distribution and morphology protein 36 (MDM36) from Saccharomyces cerevisiae (strain ATCC 204508 / S288c) (Baker's yeast).